Consider the following 321-residue polypeptide: Basic endochitinase A (321 aa).

Positions 1-19 (MGAFALFAVLAMAVTMAVA) are cleaved as a signal peptide. One can recognise a Chitin-binding type-1 domain in the interval 20–60 (EQCGSQAGGATCPNCLCCSRFGWCGSTSDYCGDGCQSQCAG). Cystine bridges form between Cys-22-Cys-37, Cys-31-Cys-43, Cys-34-Cys-61, Cys-36-Cys-50, and Cys-54-Cys-58. Residues 62–79 (GGGGTPVTPTPTPSGGGG) are hinge region (Gly/Pro/Thr-rich). Residues 80 to 321 (VSSIVSRALF…LDCYNQRPFA (242 aa)) form a catalytic region. 3 disulfide bridges follow: Cys-101–Cys-163, Cys-175–Cys-183, and Cys-301–Cys-314. Residue Glu-145 is the Proton donor of the active site.

The protein belongs to the glycosyl hydrolase 19 family. Chitinase class I subfamily. As to expression, localized in the aleurone cells of the seed endosperm (at protein level).

The catalysed reaction is Random endo-hydrolysis of N-acetyl-beta-D-glucosaminide (1-&gt;4)-beta-linkages in chitin and chitodextrins.. Its function is as follows. Defense against chitin-containing fungal pathogens. Binds the hyphal tips, lateral walls and septa of fungi and degrades mature chitin. In Secale cereale (Rye), this protein is Basic endochitinase A.